The following is a 351-amino-acid chain: Phospho-N-acetylmuramoyl-pentapeptide-transferase (351 aa).

Helical transmembrane passes span 17 to 37 (MAYA…HIIL), 62 to 82 (GIPT…LVFW), 85 to 105 (ILNV…FLGF), 124 to 144 (FKIY…YYFG), 161 to 181 (IDLG…ASNS), 190 to 210 (GLAI…AYLT), 230 to 250 (LVIF…FNAY), 254 to 274 (IMMG…AALI), 279 to 299 (ILFS…IIQV), and 328 to 348 (QVVI…LSTI).

This sequence belongs to the glycosyltransferase 4 family. MraY subfamily. Requires Mg(2+) as cofactor.

Its subcellular location is the cell inner membrane. The enzyme catalyses UDP-N-acetyl-alpha-D-muramoyl-L-alanyl-gamma-D-glutamyl-meso-2,6-diaminopimeloyl-D-alanyl-D-alanine + di-trans,octa-cis-undecaprenyl phosphate = di-trans,octa-cis-undecaprenyl diphospho-N-acetyl-alpha-D-muramoyl-L-alanyl-D-glutamyl-meso-2,6-diaminopimeloyl-D-alanyl-D-alanine + UMP. Its pathway is cell wall biogenesis; peptidoglycan biosynthesis. Functionally, catalyzes the initial step of the lipid cycle reactions in the biosynthesis of the cell wall peptidoglycan: transfers peptidoglycan precursor phospho-MurNAc-pentapeptide from UDP-MurNAc-pentapeptide onto the lipid carrier undecaprenyl phosphate, yielding undecaprenyl-pyrophosphoryl-MurNAc-pentapeptide, known as lipid I. The protein is Phospho-N-acetylmuramoyl-pentapeptide-transferase of Borrelia garinii subsp. bavariensis (strain ATCC BAA-2496 / DSM 23469 / PBi) (Borreliella bavariensis).